The following is a 624-amino-acid chain: Iron transport multicopper oxidase FET3 (624 aa).

A signal peptide spans Met-1–Ala-20. Topologically, residues Ala-21–Lys-555 are extracellular. 2 consecutive Plastocyanin-like domains span residues Ile-46–Glu-144 and Asn-190–Asn-292. N-linked (GlcNAc...) asparagine glycosylation is found at Asn-49 and Asn-77. Cu cation contacts are provided by His-81 and His-83. Asn-113 carries N-linked (GlcNAc...) asparagine glycosylation. Residues His-126 and His-128 each coordinate Cu cation. Asn-194, Asn-198, Asn-244, Asn-265, Asn-292, Asn-300, and Asn-359 each carry an N-linked (GlcNAc...) asparagine glycan. Residues Asn-382–Asp-499 enclose the Plastocyanin-like 3 domain. Cu cation is bound by residues His-413, His-416, and His-418. An N-linked (GlcNAc...) asparagine glycan is attached at Asn-441. His-481, Cys-482, His-483, and His-487 together coordinate Cu cation. A helical transmembrane segment spans residues Gly-556 to Phe-576. The Cytoplasmic portion of the chain corresponds to Tyr-577–His-624. A disordered region spans residues Asp-603 to His-624. Residues Val-608–His-624 are compositionally biased toward low complexity.

The protein belongs to the multicopper oxidase family. Requires Cu cation as cofactor.

The protein localises to the cell membrane. In terms of biological role, iron transport multicopper ferroxidase required for Fe(2+) high affinity uptake. Required to oxidize Fe(2+) and release it from the transporter. Essential component of copper-dependent iron transport. The sequence is that of Iron transport multicopper oxidase FET3 (FET3) from Candida albicans (Yeast).